Reading from the N-terminus, the 525-residue chain is Phospho-2-dehydro-3-deoxyheptonate aldolase 1, chloroplastic (525 aa).

The segment covering 1–13 has biased composition (polar residues); the sequence is MALSNASSLSTRS. The segment at 1 to 35 is disordered; sequence MALSNASSLSTRSIYGGDLSHRPSNRQSSFTFHPA. A chloroplast-targeting transit peptide spans 1-52; it reads MALSNASSLSTRSIYGGDLSHRPSNRQSSFTFHPAVNTKPKSVNLVTAVHAA.

This sequence belongs to the class-II DAHP synthase family.

The protein resides in the plastid. It is found in the chloroplast. The catalysed reaction is D-erythrose 4-phosphate + phosphoenolpyruvate + H2O = 7-phospho-2-dehydro-3-deoxy-D-arabino-heptonate + phosphate. It participates in metabolic intermediate biosynthesis; chorismate biosynthesis; chorismate from D-erythrose 4-phosphate and phosphoenolpyruvate: step 1/7. This Arabidopsis thaliana (Mouse-ear cress) protein is Phospho-2-dehydro-3-deoxyheptonate aldolase 1, chloroplastic (DHS1).